Reading from the N-terminus, the 146-residue chain is Large ribosomal subunit protein uL13 (146 aa).

It belongs to the universal ribosomal protein uL13 family. Part of the 50S ribosomal subunit.

Functionally, this protein is one of the early assembly proteins of the 50S ribosomal subunit, although it is not seen to bind rRNA by itself. It is important during the early stages of 50S assembly. This chain is Large ribosomal subunit protein uL13, found in Mycoplasma pneumoniae (strain ATCC 29342 / M129 / Subtype 1) (Mycoplasmoides pneumoniae).